The following is a 366-amino-acid chain: Peptide chain release factor 2 (366 aa).

An N5-methylglutamine modification is found at Gln-249.

It belongs to the prokaryotic/mitochondrial release factor family. Post-translationally, methylated by PrmC. Methylation increases the termination efficiency of RF2.

It localises to the cytoplasm. Functionally, peptide chain release factor 2 directs the termination of translation in response to the peptide chain termination codons UGA and UAA. In Petrotoga mobilis (strain DSM 10674 / SJ95), this protein is Peptide chain release factor 2.